Reading from the N-terminus, the 665-residue chain is Protein kinase domain-containing protein ppk2 (665 aa).

4 disordered regions span residues 42–63, 82–152, 187–217, and 286–343; these read PNDS…KKKF, GNST…LSRS, LNSQ…SSMN, and AESL…VGHP. Over residues 82-104 the composition is skewed to polar residues; that stretch reads GNSTRSPPFHLQNQKSNGQSEVW. Composition is skewed to low complexity over residues 137–152 and 206–217; these read SLSR…LSRS and TNRLSSSTSSMN. Residues 294 to 316 are compositionally biased toward polar residues; the sequence is SATTIQQGDVSSYPLSRSVSTPV. A Phosphoserine modification is found at S358. In terms of domain architecture, Protein kinase spans 388–637; sequence YTDFTKICQQ…NMLLETSSFL (250 aa). Residues 394-402 and K417 each bind ATP; that span reads ICQQDTVGT.

The protein resides in the cytoplasm. This Schizosaccharomyces pombe (strain 972 / ATCC 24843) (Fission yeast) protein is Protein kinase domain-containing protein ppk2 (ppk2).